A 426-amino-acid chain; its full sequence is Dihydroorotase (426 aa).

Zn(2+) is bound by residues His-58 and His-60. Substrate-binding positions include 60 to 62 (HLR) and Asn-92. Zn(2+) contacts are provided by Asp-150, His-177, and His-230. Asn-276 provides a ligand contact to substrate. Asp-303 contacts Zn(2+). The active site involves Asp-303. Position 307 (His-307) interacts with substrate.

The protein belongs to the metallo-dependent hydrolases superfamily. DHOase family. Class I DHOase subfamily. Zn(2+) is required as a cofactor.

The enzyme catalyses (S)-dihydroorotate + H2O = N-carbamoyl-L-aspartate + H(+). Its pathway is pyrimidine metabolism; UMP biosynthesis via de novo pathway; (S)-dihydroorotate from bicarbonate: step 3/3. In terms of biological role, catalyzes the reversible cyclization of carbamoyl aspartate to dihydroorotate. This Acetivibrio thermocellus (strain ATCC 27405 / DSM 1237 / JCM 9322 / NBRC 103400 / NCIMB 10682 / NRRL B-4536 / VPI 7372) (Clostridium thermocellum) protein is Dihydroorotase.